A 248-amino-acid chain; its full sequence is Lysine-rich arabinogalactan protein 19 (248 aa).

The first 24 residues, 1–24 (MESNSIIWSLLLASALISSFSVNA), serve as a signal peptide directing secretion. Residues 25-37 (QGPAASPVTSTTT) are compositionally biased toward low complexity. The disordered stretch occupies residues 25–221 (QGPAASPVTS…APSPNTNGGN (197 aa)). Composition is skewed to pro residues over residues 38-57 (APPPTTAAPPTTAAPPPTTT), 67-86 (PASPVTPPPAVTPTSPPAPK), and 94-171 (ATPP…PAPA). Over residues 173–187 (TKHKRKHKHKRHHHA) the composition is skewed to basic residues. Residues 189 to 203 (APAPIPPSPPSPPVL) are compositionally biased toward pro residues. A lipid anchor (GPI-anchor amidated serine) is attached at Ser-196. A propeptide spans 197–248 (PPSPPVLTDPQDTAPAPSPNTNGGNALNQLKGRAVMWLNTGLVILFLLAMTA) (removed in mature form).

The protein belongs to the lysine-rich AGP family. O-glycosylated on the hydroxyproline residues. As to expression, strongly expressed in stems, moderately expressed in flowers and roots and weakly expressed in young leaves.

Its subcellular location is the cell membrane. Proteoglycan that seems to be implicated in diverse developmental roles such as differentiation, cell-cell recognition, embryogenesis and programmed cell death. This Arabidopsis thaliana (Mouse-ear cress) protein is Lysine-rich arabinogalactan protein 19 (AGP19).